A 490-amino-acid chain; its full sequence is Glutamate--tRNA ligase 2 (490 aa).

Positions 33-43 (PSPTGYLHIGG) match the 'HIGH' region motif. A 'KMSKS' region motif is present at residues 262–266 (KLSKR). Residue Lys-265 coordinates ATP.

Belongs to the class-I aminoacyl-tRNA synthetase family. Glutamate--tRNA ligase type 1 subfamily. As to quaternary structure, monomer.

Its subcellular location is the cytoplasm. The catalysed reaction is tRNA(Glu) + L-glutamate + ATP = L-glutamyl-tRNA(Glu) + AMP + diphosphate. Functionally, catalyzes the attachment of glutamate to tRNA(Glu) in a two-step reaction: glutamate is first activated by ATP to form Glu-AMP and then transferred to the acceptor end of tRNA(Glu). In Parvibaculum lavamentivorans (strain DS-1 / DSM 13023 / NCIMB 13966), this protein is Glutamate--tRNA ligase 2.